Reading from the N-terminus, the 642-residue chain is Zinc finger protein 14 (642 aa).

The 73-residue stretch at 4–76 (VSFEDVAVNF…MVERLCESRK (73 aa)) folds into the KRAB domain. Residues 103 to 125 (HECSFCGRDFMHHSSLNRHMRSH) form a C2H2-type 1 zinc finger. The C2H2-type 2; degenerate zinc finger occupies 141 to 163 (RKHKAVEKTFSYHHCFRKHERTH). A C2H2-type 3 zinc finger spans residues 169-191 (YECKQCGKAFIYYQPFQRHERTH). Residues 197–217 (YECKQCGKTFIYYQSFQQHAH) form a C2H2-type 4; atypical zinc finger. 15 C2H2-type zinc fingers span residues 223–245 (YECK…ERTH), 251–273 (YECK…ERTH), 279–301 (YKCK…KRTH), 307–329 (YECK…VITH), 335–357 (YKCK…ERTH), 363–385 (YECK…ERTH), 391–413 (YECK…ETTH), 419–441 (YECK…ERTH), 447–469 (YECK…ERSH), 475–497 (YECK…ERTH), 503–525 (YECK…EKIH), 531–553 (FECK…ERTH), 559–581 (YQCK…ERTH), 587–609 (YRCK…ERSH), and 615–637 (YECK…ERTH).

Belongs to the krueppel C2H2-type zinc-finger protein family.

The protein localises to the nucleus. Functionally, may be involved in transcriptional regulation. This Pongo abelii (Sumatran orangutan) protein is Zinc finger protein 14 (ZNF14).